We begin with the raw amino-acid sequence, 151 residues long: MIPTTILISAALLSSALAGPWANICASKSSNEIRTCDSYGCGQYSAQRTQRHHPGVDVLCSDGSVVYAPFTGKIVGQEKPYRNKNAINDGIRLSGRGFCVKIFYIKPIKYKGSIKKGEKLGTLLPLQKIYPGIQSHVHVENCDSSDPTAYL.

Positions 1–18 (MIPTTILISAALLSSALA) are cleaved as a signal peptide. 3 disulfides stabilise this stretch: cysteine 25–cysteine 60, cysteine 36–cysteine 41, and cysteine 99–cysteine 142. Zn(2+) contacts are provided by histidine 53, aspartate 57, and histidine 138.

Belongs to the LECT2/MIM-1 family. As to expression, highly expressed in liver and weakly in testis. Not expressed in heart, brain, spleen, lung, skeletal muscle and kidney.

It is found in the secreted. Functionally, has a neutrophil chemotactic activity. Also a positive regulator of chondrocyte proliferation. The polypeptide is Leukocyte cell-derived chemotaxin-2 (Lect2) (Mus musculus (Mouse)).